Here is a 104-residue protein sequence, read N- to C-terminus: DNA-directed RNA polymerase subunit Rpo13 (104 aa).

2 disordered regions span residues 1 to 33 and 78 to 104; these read MVSGMSTDEEKEGTSDEEVNEEKEVEETSEDEF and RDSRRKAKKAVSKKVKKTKKKEKSVEG. Acidic residues predominate over residues 7–31; it reads TDEEKEGTSDEEVNEEKEVEETSED. The span at 80–104 shows a compositional bias: basic residues; the sequence is SRRKAKKAVSKKVKKTKKKEKSVEG.

It belongs to the archaeal Rpo13 RNA polymerase subunit family. As to quaternary structure, part of the 13-subunit RNA polymerase complex.

The protein resides in the cytoplasm. The catalysed reaction is RNA(n) + a ribonucleoside 5'-triphosphate = RNA(n+1) + diphosphate. Functionally, DNA-dependent RNA polymerase (RNAP) catalyzes the transcription of DNA into RNA using the four ribonucleoside triphosphates as substrates. Probably binds dsDNA. This is DNA-directed RNA polymerase subunit Rpo13 from Saccharolobus solfataricus (strain ATCC 35092 / DSM 1617 / JCM 11322 / P2) (Sulfolobus solfataricus).